A 110-amino-acid polypeptide reads, in one-letter code: UPF0060 membrane protein Mmwyl1_1139 (110 aa).

The next 4 membrane-spanning stretches (helical) occupy residues 7–27 (ISLFMLTALAEIIGCYLPYLW), 33–53 (TIWLLVPAALSLAVFTWLLTL), 63–83 (AAYGGVYIFMAVLWLWIVDGI), and 87–107 (TWDMIGSAVALLGMAIIMFAP).

The protein belongs to the UPF0060 family.

It localises to the cell inner membrane. The protein is UPF0060 membrane protein Mmwyl1_1139 of Marinomonas sp. (strain MWYL1).